The following is a 1285-amino-acid chain: Period circadian protein homolog 1 (1285 aa).

The segment at 1–134 is disordered; sequence MSGPLEGADG…SSEQSARART (134 aa). The interval 1 to 151 is interaction with BTRC; it reads MSGPLEGADG…LRELKLRLPP (151 aa). Composition is skewed to low complexity over residues 48-57 and 64-115; these read NSNGSSGNES and GASQ…ASSE. Over residues 116–132 the composition is skewed to polar residues; that stretch reads QDNPSTSGCSSEQSARA. Threonine 121 carries the phosphothreonine; by CSNK1E modification. Serine 122 and serine 126 each carry phosphoserine; by CSNK1E. Positions 138-147 match the Nuclear export signal 1 motif; the sequence is LMTALRELKL. 2 PAS domains span residues 208–275 and 348–414; these read ITSE…PFRL and YEAP…KILQ. Residues 422–465 form the PAC domain; that stretch reads HSPIRFCARNGEYVTMDTSWAGFVHPWSRKVAFVLGRHKVRTAP. Positions 489–498 match the Nuclear export signal 2 motif; sequence LSEQIHRLLL. Disordered regions lie at residues 503-544 and 643-694; these read SSSP…PAPV and TKRK…KEPV. Low complexity-rich tracts occupy residues 523 to 533 and 648 to 658; these read SPGSSSDSNGG and ASSSSCTASSA. The tract at residues 592–811 is required for phosphorylation by CSNK1E; the sequence is ELEVVPMPNQ…GLDSSSATPS (220 aa). Serine 657, serine 659, serine 700, and serine 811 each carry phosphoserine. Disordered stretches follow at residues 802-867 and 931-1030; these read GLDS…PPST and LSQA…DALS. Residues 820 to 836 carry the Nuclear localization signal motif; the sequence is VPPGRRHHCRSKAKRSR. Residues 823-840 are compositionally biased toward basic residues; it reads GRRHHCRSKAKRSRHHHT. Over residues 853–867 the composition is skewed to pro residues; sequence SPVPPSGPWPPPPST. Residues 943-954 show a composition bias toward low complexity; it reads ASHSPSPSLTPL. A compositionally biased stretch (polar residues) spans 967–979; that stretch reads FNSRCSSPLQLNL. Phosphoserine occurs at positions 972 and 973. The short motif at 975–982 is the Nuclear export signal 3 element; sequence LQLNLLQL. The LXXLL motif lies at 1036-1040; it reads LELLL. The span at 1045–1055 shows a compositional bias: low complexity; that stretch reads RSGTGSAASGS. Disordered regions lie at residues 1045 to 1091 and 1202 to 1285; these read RSGT…SKYF and IQDP…NSTS. The span at 1056–1070 shows a compositional bias: gly residues; sequence LGSGLGSGSGSGSHE. Residues 1071-1088 show a composition bias toward low complexity; sequence GGSTSASITRSSQSSHTS. The CRY binding domain stretch occupies residues 1142–1285; the sequence is SRDRASVLKQ…ALPAEENSTS (144 aa). Residues 1229–1241 are compositionally biased toward gly residues; it reads GEGGGGGGGGGEG. Residues 1269-1285 are compositionally biased toward polar residues; sequence GGSSSSPALPAEENSTS.

In terms of assembly, homodimer. Component of the circadian core oscillator, which includes the CRY proteins, CLOCK or NPAS2, BMAL1 or BMAL2, CSNK1D and/or CSNK1E, TIMELESS, and the PER proteins. Interacts directly with TIMELESS, PER2, PER3, CRY1 and CRY2. Interacts with BMAL1 and CLOCK. Interacts with GPRASP1. Interacts (phosphorylated) with BTRC and FBXW11; the interactions trigger proteasomal degradation. Interacts with NONO, WDR5 and SFPQ. Interacts with USP2. Interacts with HNF4A. Post-translationally, phosphorylated on serine residues by CSNK1D, CSNK1E and probably also by CSNK1G2. Phosphorylation by CSNK1D or CSNK1E promotes nuclear location of PER proteins as well as ubiquitination and subsequent degradation. May be dephosphorylated by PP1. Ubiquitinated; requires phosphorylation by CSNK1E and interaction with BTRC and FBXW11. Deubiquitinated by USP2. In terms of tissue distribution, expressed in the brain, mainly in the suprachiasmatic nucleus (SCN). Expression also found in the harderian gland, lung, eye, intestine, liver and skeletal muscle.

The protein localises to the nucleus. It is found in the cytoplasm. Transcriptional repressor which forms a core component of the circadian clock. The circadian clock, an internal time-keeping system, regulates various physiological processes through the generation of approximately 24 hour circadian rhythms in gene expression, which are translated into rhythms in metabolism and behavior. It is derived from the Latin roots 'circa' (about) and 'diem' (day) and acts as an important regulator of a wide array of physiological functions including metabolism, sleep, body temperature, blood pressure, endocrine, immune, cardiovascular, and renal function. Consists of two major components: the central clock, residing in the suprachiasmatic nucleus (SCN) of the brain, and the peripheral clocks that are present in nearly every tissue and organ system. Both the central and peripheral clocks can be reset by environmental cues, also known as Zeitgebers (German for 'timegivers'). The predominant Zeitgeber for the central clock is light, which is sensed by retina and signals directly to the SCN. The central clock entrains the peripheral clocks through neuronal and hormonal signals, body temperature and feeding-related cues, aligning all clocks with the external light/dark cycle. Circadian rhythms allow an organism to achieve temporal homeostasis with its environment at the molecular level by regulating gene expression to create a peak of protein expression once every 24 hours to control when a particular physiological process is most active with respect to the solar day. Transcription and translation of core clock components (CLOCK, NPAS2, BMAL1, BMAL2, PER1, PER2, PER3, CRY1 and CRY2) plays a critical role in rhythm generation, whereas delays imposed by post-translational modifications (PTMs) are important for determining the period (tau) of the rhythms (tau refers to the period of a rhythm and is the length, in time, of one complete cycle). A diurnal rhythm is synchronized with the day/night cycle, while the ultradian and infradian rhythms have a period shorter and longer than 24 hours, respectively. Disruptions in the circadian rhythms contribute to the pathology of cardiovascular diseases, cancer, metabolic syndromes and aging. A transcription/translation feedback loop (TTFL) forms the core of the molecular circadian clock mechanism. Transcription factors, CLOCK or NPAS2 and BMAL1 or BMAL2, form the positive limb of the feedback loop, act in the form of a heterodimer and activate the transcription of core clock genes and clock-controlled genes (involved in key metabolic processes), harboring E-box elements (5'-CACGTG-3') within their promoters. The core clock genes: PER1/2/3 and CRY1/2 which are transcriptional repressors form the negative limb of the feedback loop and interact with the CLOCK|NPAS2-BMAL1|BMAL2 heterodimer inhibiting its activity and thereby negatively regulating their own expression. This heterodimer also activates nuclear receptors NR1D1/2 and RORA/B/G, which form a second feedback loop and which activate and repress BMAL1 transcription, respectively. Regulates circadian target genes expression at post-transcriptional levels, but may not be required for the repression at transcriptional level. Controls PER2 protein decay. Represses CRY2 preventing its repression on CLOCK/BMAL1 target genes such as FXYD5 and SCNN1A in kidney and PPARA in liver. Besides its involvement in the maintenance of the circadian clock, has an important function in the regulation of several processes. Participates in the repression of glucocorticoid receptor NR3C1/GR-induced transcriptional activity by reducing the association of NR3C1/GR to glucocorticoid response elements (GREs) by BMAL1:CLOCK. Plays a role in the modulation of the neuroinflammatory state via the regulation of inflammatory mediators release, such as CCL2 and IL6. In spinal astrocytes, negatively regulates the MAPK14/p38 and MAPK8/JNK MAPK cascades as well as the subsequent activation of NFkappaB. Coordinately regulates the expression of multiple genes that are involved in the regulation of renal sodium reabsorption. Can act as gene expression activator in a gene and tissue specific manner, in kidney enhances WNK1 and SLC12A3 expression in collaboration with CLOCK. Modulates hair follicle cycling. Represses the CLOCK-BMAL1 induced transcription of BHLHE40/DEC1. In Spalax judaei (Judean Mountains blind mole rat), this protein is Period circadian protein homolog 1 (PER1).